We begin with the raw amino-acid sequence, 208 residues long: ATP-dependent Clp protease proteolytic subunit (208 aa).

Ser-105 (nucleophile) is an active-site residue. Residue His-130 is part of the active site.

The protein belongs to the peptidase S14 family. As to quaternary structure, fourteen ClpP subunits assemble into 2 heptameric rings which stack back to back to give a disk-like structure with a central cavity, resembling the structure of eukaryotic proteasomes.

The protein localises to the cytoplasm. It carries out the reaction Hydrolysis of proteins to small peptides in the presence of ATP and magnesium. alpha-casein is the usual test substrate. In the absence of ATP, only oligopeptides shorter than five residues are hydrolyzed (such as succinyl-Leu-Tyr-|-NHMec, and Leu-Tyr-Leu-|-Tyr-Trp, in which cleavage of the -Tyr-|-Leu- and -Tyr-|-Trp bonds also occurs).. Cleaves peptides in various proteins in a process that requires ATP hydrolysis. Has a chymotrypsin-like activity. Plays a major role in the degradation of misfolded proteins. The chain is ATP-dependent Clp protease proteolytic subunit from Xylella fastidiosa (strain 9a5c).